We begin with the raw amino-acid sequence, 824 residues long: Type IV secretion system protein PtlC (824 aa).

456–463 provides a ligand contact to ATP; sequence GQSGSGKT.

The protein belongs to the TrbE/VirB4 family.

It localises to the cell membrane. Its function is as follows. Component of the type IV secretion system ptl essential for secretion of assembled pertussis toxin (PTX) through the outer membrane. This Bordetella pertussis (strain Tohama I / ATCC BAA-589 / NCTC 13251) protein is Type IV secretion system protein PtlC (ptlC).